The sequence spans 478 residues: UDP-N-acetylmuramate--L-alanine ligase (478 aa).

126-132 (GTHGKTT) lines the ATP pocket.

Belongs to the MurCDEF family.

It localises to the cytoplasm. The catalysed reaction is UDP-N-acetyl-alpha-D-muramate + L-alanine + ATP = UDP-N-acetyl-alpha-D-muramoyl-L-alanine + ADP + phosphate + H(+). It functions in the pathway cell wall biogenesis; peptidoglycan biosynthesis. Functionally, cell wall formation. The protein is UDP-N-acetylmuramate--L-alanine ligase of Synechococcus sp. (strain JA-2-3B'a(2-13)) (Cyanobacteria bacterium Yellowstone B-Prime).